Reading from the N-terminus, the 137-residue chain is Large ribosomal subunit protein uL16c (137 aa).

Belongs to the universal ribosomal protein uL16 family. In terms of assembly, part of the 50S ribosomal subunit.

The protein localises to the plastid. It is found in the chloroplast. This is Large ribosomal subunit protein uL16c from Thalassiosira pseudonana (Marine diatom).